The following is a 752-amino-acid chain: Neuroendocrine convertase 1 (752 aa).

An N-terminal signal peptide occupies residues 1-27 (MKQRGWTLQCTAFTLFCVWCALNSVKA). The propeptide occupies 28-110 (KRQFVNEWAA…QQYEKERRKR (83 aa)). The Peptidase S8 domain occupies 129–450 (QWYLQDTRMT…FGLLNAKALV (322 aa)). D167 serves as the catalytic Charge relay system. N173 carries N-linked (GlcNAc...) asparagine glycosylation. Residue H208 is the Charge relay system of the active site. Intrachain disulfides connect C225–C374 and C317–C347. The active-site Charge relay system is the S382. N401 carries N-linked (GlcNAc...) asparagine glycosylation. The P/Homo B domain occupies 460–597 (NVPEKKECII…KLILHGTSSQ (138 aa)). Residues C467 and C494 are joined by a disulfide bond. Positions 631 to 662 (PTQNSLNGNLLVPKNSSSSSVEDRRDEQVQGA) are disordered. N645 carries an N-linked (GlcNAc...) asparagine glycan.

It belongs to the peptidase S8 family. Furin subfamily. The cofactor is Ca(2+).

The protein resides in the cytoplasmic vesicle. It localises to the secretory vesicle. It catalyses the reaction Release of protein hormones, neuropeptides and renin from their precursors, generally by hydrolysis of -Lys-Arg-|- bonds.. Involved in the processing of hormone and other protein precursors at sites comprised of pairs of basic amino acid residues. Substrates include POMC, renin, enkephalin, dynorphin, somatostatin, insulin and AGRP. The polypeptide is Neuroendocrine convertase 1 (Pcsk1) (Rattus norvegicus (Rat)).